The chain runs to 427 residues: Septin-8-A (427 aa).

Positions 39–305 (QGFCFNILCV…ELYRRCKLEE (267 aa)) constitute a Septin-type G domain. Residues 49–56 (GETGIGKS) are G1 motif. GTP is bound by residues 49–56 (GETGIGKS), Gly104, 185–193 (KADTISKSE), Gly239, and Arg254. Residues 101–104 (DTVG) form a G3 motif region. The segment at 184 to 187 (AKAD) is G4 motif. Positions 320 to 409 (LQETYEAKRK…KAAMEALQSQ (90 aa)) form a coiled coil. Over residues 376–389 (QEESKKVEDKRRDL) the composition is skewed to basic and acidic residues. Residues 376-427 (QEESKKVEDKRRDLEEEMNSFNRRKAAMEALQSQSFQATSQQPLKKDKDRKN) form a disordered region. Positions 406 to 418 (LQSQSFQATSQQP) are enriched in polar residues.

It belongs to the TRAFAC class TrmE-Era-EngA-EngB-Septin-like GTPase superfamily. Septin GTPase family.

The sequence is that of Septin-8-A (sept8-a) from Xenopus laevis (African clawed frog).